The sequence spans 483 residues: Probable cytochrome P450 517A4 (483 aa).

A helical transmembrane segment spans residues 1-21 (MEIVNVLLFLIILFLVKDFVK). Cys429 contacts heme.

The protein belongs to the cytochrome P450 family. Heme serves as cofactor.

Its subcellular location is the membrane. In Dictyostelium discoideum (Social amoeba), this protein is Probable cytochrome P450 517A4 (cyp517A4).